A 316-amino-acid polypeptide reads, in one-letter code: Ribosomal protein L11 methyltransferase (316 aa).

S-adenosyl-L-methionine contacts are provided by Thr157, Gly178, Asp200, and Asn243.

This sequence belongs to the methyltransferase superfamily. PrmA family.

Its subcellular location is the cytoplasm. It catalyses the reaction L-lysyl-[protein] + 3 S-adenosyl-L-methionine = N(6),N(6),N(6)-trimethyl-L-lysyl-[protein] + 3 S-adenosyl-L-homocysteine + 3 H(+). Methylates ribosomal protein L11. The sequence is that of Ribosomal protein L11 methyltransferase from Streptococcus pneumoniae (strain Hungary19A-6).